The sequence spans 601 residues: MALSFFGGGGASHLKYFDIRLDEDYIVFRGGEQEAASAQLSGKLLLCLSEPLSVKHVRLNLTGISRVCWHLPSSSATGGRKSWREKVFYEKSWTFRDAGKSKTEILAAGNYEFPFHVILEGSMPESVEGLSDTYVTYRFKAEIGRKYAKDIVVRKPLRIIRTLDSSALELSHAMSVENIWPNKIEYSISTPTKAVIFGTSIRVDFKLIPLLKGLKIGQIVSQLIESHDLTLNPEDPDSVRNTYKNTRTIVNDEHELDEEGNLEIIDEAAEGYQFSRFLDLPKTLTRCLQDTDTRGIKIRHKLKFRVQLLNPDGHISELRATLPVSIFISPNLAIDDNNNLVDQTPQSAQRAVNDLAQQAPPLYGEHQFDQLYSEVDPSGYRTPGPGSGPGTPFGTLSRNLSAENLASMNALTNTDISASALHSRLSNLHASRFSNPSPSDADGHTDAEYRRLGVSTDSFGPSSGSNSQSPASPELSRRPSDEGYHDHDYIPSGMATPFHPQFAEVESLSRVPSYSTAVRSSVGPCDSELPDYQAVVAEDTAMPTLQSPQQAHIRSVGRGVSTGHTGIDVHHLRSGFFNSRTSAHHDDDDRRLRLVQARARV.

Disordered stretches follow at residues 374-397 and 454-496; these read EVDP…GTLS and VSTD…GMAT. Residues 455–473 are compositionally biased toward low complexity; the sequence is STDSFGPSSGSNSQSPASP. The span at 475–489 shows a compositional bias: basic and acidic residues; it reads LSRRPSDEGYHDHDY.

This sequence belongs to the arrestin family. As to quaternary structure, interacts with hulA.

In terms of biological role, component of the regulatory network controlling carbon source utilization through ubiquitination and deubiquitination involving creA, creB, creC, creD and acrB. May be involved in signaling by recognizing appropriately phosphorylated substrates via its arrestin domains and then recruit a HECT-type ubiquitin ligase such as hulA, leading to ubiquitination of the substrate, providing a link between ubiquitination and phosphorylation in protein regulation and stability. The protein is Probable HECT-type ubiquitin ligase-interacting protein creD (creD) of Aspergillus fumigatus (strain CBS 144.89 / FGSC A1163 / CEA10) (Neosartorya fumigata).